The following is a 730-amino-acid chain: Guanylate cyclase soluble subunit alpha-2 (730 aa).

The interval 1–53 (MSRRKISSESFSSLGSDYLETSPEEEGECPLSKLCWNGSRSPPGPPGSRAAAM) is disordered. Residues 519-646 (TMLFSDIVGF…NNVTLASKFE (128 aa)) enclose the Guanylate cyclase domain.

This sequence belongs to the adenylyl cyclase class-4/guanylyl cyclase family. Heterodimer of an alpha and a beta chain.

The protein localises to the cytoplasm. It catalyses the reaction GTP = 3',5'-cyclic GMP + diphosphate. With respect to regulation, activated by nitric oxide in the presence of magnesium or manganese ions. Has guanylyl cyclase on binding to the beta-1 subunit. The protein is Guanylate cyclase soluble subunit alpha-2 (Gucy1a2) of Rattus norvegicus (Rat).